The primary structure comprises 255 residues: Protein DAL82 (255 aa).

Residues 87 to 149 are disordered; that stretch reads PEHPRPRTKF…SQPLPLDSIT (63 aa). Residues 128–138 are compositionally biased toward basic and acidic residues; sequence PNNHSSDDEHS.

In terms of biological role, positive regulator of allophanate-induced genes in S.cerevisiae. In Saccharomyces cerevisiae (strain ATCC 204508 / S288c) (Baker's yeast), this protein is Protein DAL82 (DAL82).